A 126-amino-acid polypeptide reads, in one-letter code: Glycine cleavage system H protein (126 aa).

A Lipoyl-binding domain is found at 23–104 (TLTVGITDHA…PYESWLFKIK (82 aa)). An N6-lipoyllysine modification is found at Lys-64.

Belongs to the GcvH family. In terms of assembly, the glycine cleavage system is composed of four proteins: P, T, L and H. (R)-lipoate serves as cofactor.

Its function is as follows. The glycine cleavage system catalyzes the degradation of glycine. The H protein shuttles the methylamine group of glycine from the P protein to the T protein. The chain is Glycine cleavage system H protein from Paraburkholderia xenovorans (strain LB400).